A 427-amino-acid polypeptide reads, in one-letter code: Serine hydroxymethyltransferase (427 aa).

(6S)-5,6,7,8-tetrahydrofolate-binding positions include leucine 122 and 126-128; that span reads GHL. Lysine 231 is subject to N6-(pyridoxal phosphate)lysine. Residues glutamate 247 and 355–357 each bind (6S)-5,6,7,8-tetrahydrofolate; that span reads SPF.

This sequence belongs to the SHMT family. In terms of assembly, homodimer. It depends on pyridoxal 5'-phosphate as a cofactor.

It is found in the cytoplasm. The enzyme catalyses (6R)-5,10-methylene-5,6,7,8-tetrahydrofolate + glycine + H2O = (6S)-5,6,7,8-tetrahydrofolate + L-serine. The protein operates within one-carbon metabolism; tetrahydrofolate interconversion. It functions in the pathway amino-acid biosynthesis; glycine biosynthesis; glycine from L-serine: step 1/1. In terms of biological role, catalyzes the reversible interconversion of serine and glycine with tetrahydrofolate (THF) serving as the one-carbon carrier. This reaction serves as the major source of one-carbon groups required for the biosynthesis of purines, thymidylate, methionine, and other important biomolecules. Also exhibits THF-independent aldolase activity toward beta-hydroxyamino acids, producing glycine and aldehydes, via a retro-aldol mechanism. This Microcystis aeruginosa (strain NIES-843 / IAM M-2473) protein is Serine hydroxymethyltransferase.